Consider the following 372-residue polypeptide: Probable G-protein coupled receptor 45 (372 aa).

Over methionine 1–alanine 38 the chain is Extracellular. Asparagine 4, asparagine 17, and asparagine 20 each carry an N-linked (GlcNAc...) asparagine glycan. The chain crosses the membrane as a helical span at residues isoleucine 39–valine 59. Residues tyrosine 60–threonine 75 lie on the Cytoplasmic side of the membrane. Residues leucine 76–isoleucine 96 form a helical membrane-spanning segment. Residues threonine 97–leucine 109 lie on the Extracellular side of the membrane. Residues serine 110 to valine 130 form a helical membrane-spanning segment. At aspartate 131 to lysine 149 the chain is on the cytoplasmic side. Residues valine 150–tryptophan 170 form a helical membrane-spanning segment. The Extracellular portion of the chain corresponds to threonine 171–threonine 198. Residues leucine 199–leucine 219 form a helical membrane-spanning segment. Residues asparagine 220–threonine 268 lie on the Cytoplasmic side of the membrane. A helical transmembrane segment spans residues isoleucine 269–leucine 289. The Extracellular segment spans residues serine 290–threonine 305. A helical membrane pass occupies residues serine 306 to tryptophan 326. Residues arginine 327–valine 372 are Cytoplasmic-facing.

This sequence belongs to the G-protein coupled receptor 1 family. In terms of tissue distribution, expressed in brain; detected in the basal forebrain, frontal cortex, and caudate, but not in thalamus, hippocampus, or putamen.

It localises to the cell membrane. In terms of biological role, orphan receptor. May play a role in brain function. This chain is Probable G-protein coupled receptor 45 (GPR45), found in Homo sapiens (Human).